A 528-amino-acid polypeptide reads, in one-letter code: ADP,ATP carrier protein 1 (528 aa).

Transmembrane regions (helical) follow at residues 24 to 44 (LKKVLPMFLMFFCISFNYTIL), 63 to 83 (IPFIKLWLVVPSAVVFMLIYA), 93 to 113 (ALFFAVLSPFVVFFALFPVVI), 124 to 144 (AFADTLQSILPSGFMGFIAML), 149 to 169 (FAVFYVLSELWGSVMLSLMFW), 184 to 204 (FYALFGVGANVALLISGPAII), 220 to 240 (WGVSLYFLMAMFLCSCAIIAA), 284 to 304 (YMLLLALLVICYGICINLVEV), 327 to 347 (FSFWTGVVSVFVMLFIGGNVI), 356 to 376 (ALVTPIMVLVTGAVFFALVIF), 381 to 401 (TGLVAALGTTPLMLAVVVGAI), and 463 to 483 (IGAMTPFLAVALFAIIMVWLT).

It belongs to the ADP/ATP translocase tlc family.

It is found in the cell membrane. This chain is ADP,ATP carrier protein 1 (tlcA), found in Chlamydia trachomatis serovar D (strain ATCC VR-885 / DSM 19411 / UW-3/Cx).